A 180-amino-acid polypeptide reads, in one-letter code: UPF0690 protein C1orf52 homolog (180 aa).

Disordered regions lie at residues 1-66 (MAAE…SVTR) and 96-180 (KIWK…KKKK). Residues 48–61 (KQAEKRLPGPDELF) are compositionally biased toward basic and acidic residues. At Thr65 the chain carries Phosphothreonine. Tyr130 carries the post-translational modification Phosphotyrosine. The span at 149–160 (EGEETVESDDDK) shows a compositional bias: acidic residues. Ser156 is subject to Phosphoserine. Over residues 161 to 180 (DERASKIRRVEPGEAAKKKK) the composition is skewed to basic and acidic residues.

Belongs to the UPF0690 family.

In Mus musculus (Mouse), this protein is UPF0690 protein C1orf52 homolog.